Reading from the N-terminus, the 150-residue chain is 3-dehydroquinate dehydratase (150 aa).

The active-site Proton acceptor is Y26. 3 residues coordinate substrate: N77, H83, and D90. H103 (proton donor) is an active-site residue. Substrate-binding positions include 104–105 (LS) and R114.

It belongs to the type-II 3-dehydroquinase family. Homododecamer.

The catalysed reaction is 3-dehydroquinate = 3-dehydroshikimate + H2O. The protein operates within metabolic intermediate biosynthesis; chorismate biosynthesis; chorismate from D-erythrose 4-phosphate and phosphoenolpyruvate: step 3/7. Functionally, catalyzes a trans-dehydration via an enolate intermediate. The polypeptide is 3-dehydroquinate dehydratase (Photorhabdus laumondii subsp. laumondii (strain DSM 15139 / CIP 105565 / TT01) (Photorhabdus luminescens subsp. laumondii)).